The primary structure comprises 1364 residues: DNA-directed RNA polymerase subunit beta' (1364 aa).

Residues Cys250, Cys317, Cys324, and Cys327 each contribute to the Zn(2+) site. Residues 1318 to 1342 (TRHNIDPSASTNAAFTRPDVDNELK) form a disordered region.

It belongs to the RNA polymerase beta' chain family. RpoC2 subfamily. In cyanobacteria the RNAP catalytic core is composed of 2 alpha, 1 beta, 1 beta', 1 gamma and 1 omega subunit. When a sigma factor is associated with the core the holoenzyme is formed, which can initiate transcription. The cofactor is Zn(2+).

The enzyme catalyses RNA(n) + a ribonucleoside 5'-triphosphate = RNA(n+1) + diphosphate. Functionally, DNA-dependent RNA polymerase catalyzes the transcription of DNA into RNA using the four ribonucleoside triphosphates as substrates. The sequence is that of DNA-directed RNA polymerase subunit beta' from Synechococcus sp. (strain CC9902).